Consider the following 203-residue polypeptide: Small ribosomal subunit protein uS4 (203 aa).

In terms of domain architecture, S4 RNA-binding spans 93 to 156 (RRLDNVVYRL…LKVPAILEAV (64 aa)).

This sequence belongs to the universal ribosomal protein uS4 family. As to quaternary structure, part of the 30S ribosomal subunit. Contacts protein S5. The interaction surface between S4 and S5 is involved in control of translational fidelity.

In terms of biological role, one of the primary rRNA binding proteins, it binds directly to 16S rRNA where it nucleates assembly of the body of the 30S subunit. With S5 and S12 plays an important role in translational accuracy. The chain is Small ribosomal subunit protein uS4 from Streptococcus sanguinis (strain SK36).